The chain runs to 399 residues: Argininosuccinate synthase (399 aa).

9-17 (AYSGGLDTS) serves as a coordination point for ATP. Tyrosine 85 is an L-citrulline binding site. An ATP-binding site is contributed by glycine 115. Residues threonine 117, asparagine 121, and aspartate 122 each contribute to the L-aspartate site. Asparagine 121 is an L-citrulline binding site. L-citrulline-binding residues include arginine 125, serine 173, glutamate 258, and tyrosine 270.

The protein belongs to the argininosuccinate synthase family. Type 1 subfamily. In terms of assembly, homotetramer.

It localises to the cytoplasm. It carries out the reaction L-citrulline + L-aspartate + ATP = 2-(N(omega)-L-arginino)succinate + AMP + diphosphate + H(+). The protein operates within amino-acid biosynthesis; L-arginine biosynthesis; L-arginine from L-ornithine and carbamoyl phosphate: step 2/3. The chain is Argininosuccinate synthase from Streptococcus uberis (strain ATCC BAA-854 / 0140J).